A 650-amino-acid chain; its full sequence is Acetyl-coenzyme A synthetase (650 aa).

Residues 191–194 (RAGR), threonine 311, and asparagine 335 contribute to the CoA site. Residues 387-389 (GEP), 411-416 (DTWWQT), aspartate 500, and arginine 515 each bind ATP. Serine 523 provides a ligand contact to CoA. An ATP-binding site is contributed by arginine 526. Mg(2+) contacts are provided by valine 537, histidine 539, and valine 542. Position 584 (arginine 584) interacts with CoA. Lysine 609 carries the post-translational modification N6-acetyllysine.

It belongs to the ATP-dependent AMP-binding enzyme family. Mg(2+) is required as a cofactor. Post-translationally, acetylated. Deacetylation by the SIR2-homolog deacetylase activates the enzyme.

The catalysed reaction is acetate + ATP + CoA = acetyl-CoA + AMP + diphosphate. Functionally, catalyzes the conversion of acetate into acetyl-CoA (AcCoA), an essential intermediate at the junction of anabolic and catabolic pathways. AcsA undergoes a two-step reaction. In the first half reaction, AcsA combines acetate with ATP to form acetyl-adenylate (AcAMP) intermediate. In the second half reaction, it can then transfer the acetyl group from AcAMP to the sulfhydryl group of CoA, forming the product AcCoA. This Shewanella halifaxensis (strain HAW-EB4) protein is Acetyl-coenzyme A synthetase.